A 539-amino-acid chain; its full sequence is Berberine bridge enzyme-like 21 (539 aa).

The first 26 residues, 1-26 (MIATQTFVSVFFFVFFLVSLPFFSSA), serve as a signal peptide directing secretion. C41 and C104 are oxidised to a cystine. An N-linked (GlcNAc...) asparagine glycan is attached at N79. One can recognise an FAD-binding PCMH-type domain in the interval 82-256 (STPKPAIIVT…LGYKVKLVPV (175 aa)). The segment at residues 119 to 181 (HDYEGLSYIS…KVHGFPAGVC (63 aa)) is a cross-link (6-(S-cysteinyl)-8alpha-(pros-histidyl)-FAD (His-Cys)). The N-linked (GlcNAc...) asparagine glycan is linked to N340.

Belongs to the oxygen-dependent FAD-linked oxidoreductase family. Requires FAD as cofactor. In terms of processing, the FAD cofactor is bound via a bicovalent 6-S-cysteinyl, 8alpha-N1-histidyl FAD linkage.

The protein resides in the secreted. It is found in the cell wall. The polypeptide is Berberine bridge enzyme-like 21 (Arabidopsis thaliana (Mouse-ear cress)).